A 330-amino-acid polypeptide reads, in one-letter code: Peroxidase 55 (330 aa).

An N-terminal signal peptide occupies residues 1 to 30 (MDIRSDDAKKPMMMWFLGMLLFSMVAESNA). 4 disulfides stabilise this stretch: cysteine 41-cysteine 121, cysteine 74-cysteine 79, cysteine 127-cysteine 326, and cysteine 206-cysteine 238. Histidine 72 (proton acceptor) is an active-site residue. Residues aspartate 73, valine 76, glycine 78, aspartate 80, and serine 82 each contribute to the Ca(2+) site. Substrate is bound at residue proline 169. A heme b-binding site is contributed by histidine 199. A Ca(2+)-binding site is contributed by threonine 200. A glycan (N-linked (GlcNAc...) asparagine) is linked at asparagine 215. Ca(2+) contacts are provided by aspartate 250, serine 253, and aspartate 258.

Belongs to the peroxidase family. Classical plant (class III) peroxidase subfamily. The cofactor is heme b. Ca(2+) is required as a cofactor. In terms of tissue distribution, slightly expressed in roots.

It localises to the secreted. The catalysed reaction is 2 a phenolic donor + H2O2 = 2 a phenolic radical donor + 2 H2O. In terms of biological role, removal of H(2)O(2), oxidation of toxic reductants, biosynthesis and degradation of lignin, suberization, auxin catabolism, response to environmental stresses such as wounding, pathogen attack and oxidative stress. These functions might be dependent on each isozyme/isoform in each plant tissue. This chain is Peroxidase 55 (PER55), found in Arabidopsis thaliana (Mouse-ear cress).